The primary structure comprises 326 residues: UPF0324 membrane protein PBPRB0970 (326 aa).

A run of 10 helical transmembrane segments spans residues 27-49 (FFII…ILGF), 70-89 (LLAY…QAIA), 94-116 (GFGL…TKAL), 123-145 (GHLI…APAI), 155-177 (ALAT…GHLL), 184-206 (FGTW…GAYG), 216-235 (IKLA…ALLF), 242-261 (IGIP…AHFV), 271-290 (IFVA…GSGI), and 303-325 (LLLG…LLNV).

It belongs to the UPF0324 family.

The protein resides in the cell membrane. The chain is UPF0324 membrane protein PBPRB0970 from Photobacterium profundum (strain SS9).